Reading from the N-terminus, the 276-residue chain is Hemin import ATP-binding protein HmuV (276 aa).

Residues 2–259 enclose the ABC transporter domain; the sequence is LTAHHLDVAR…AHIAQCYGFA (258 aa). Residue 34-41 coordinates ATP; sequence GRNGAGKS.

Belongs to the ABC transporter superfamily. Heme (hemin) importer (TC 3.A.1.14.5) family. In terms of assembly, the complex is composed of two ATP-binding proteins (HmuV), two transmembrane proteins (HmuU) and a solute-binding protein (HmuT).

The protein resides in the cell inner membrane. Its function is as follows. Part of the ABC transporter complex HmuTUV involved in hemin import. Responsible for energy coupling to the transport system. The chain is Hemin import ATP-binding protein HmuV from Burkholderia cenocepacia (strain HI2424).